We begin with the raw amino-acid sequence, 521 residues long: Probable xyloglucan galactosyltransferase GT14 (521 aa).

Residues 1–30 (MRPKNYSQMEKPISITTGKFRTNNNNNHNN) are Cytoplasmic-facing. A helical; Signal-anchor for type II membrane protein transmembrane segment spans residues 31–51 (VWFVVPLFFILCFVLLCFDYS). At 52-521 (ALFTDTDETA…SPYEEPQVLA (470 aa)) the chain is on the lumenal side. Residues 72–92 (TSSEFTKDDNFSRFPDDPSPD) are disordered. A compositionally biased stretch (basic and acidic residues) spans 76–87 (FTKDDNFSRFPD). Residues Asn-81, Asn-177, Asn-203, Asn-249, Asn-265, and Asn-411 are each glycosylated (N-linked (GlcNAc...) asparagine). Positions 492–521 (RQGKDGSDGFDDRDDYKYTFSPYEEPQVLA) are disordered.

This sequence belongs to the glycosyltransferase 47 family. In terms of tissue distribution, expressed in roots, hypocotyls, cotyledons, leaves, stems, stamens and carpels.

It localises to the golgi apparatus membrane. Functionally, functions in xyloglucan synthesis by adding side chains to the xylosylated glucan backbone. Involved in the galactosylation of hemicellulose xyloglucan. This chain is Probable xyloglucan galactosyltransferase GT14, found in Arabidopsis thaliana (Mouse-ear cress).